A 293-amino-acid polypeptide reads, in one-letter code: Ribosomal protein L11 methyltransferase (293 aa).

S-adenosyl-L-methionine-binding residues include threonine 145, glycine 166, aspartate 188, and asparagine 230.

Belongs to the methyltransferase superfamily. PrmA family.

The protein localises to the cytoplasm. The enzyme catalyses L-lysyl-[protein] + 3 S-adenosyl-L-methionine = N(6),N(6),N(6)-trimethyl-L-lysyl-[protein] + 3 S-adenosyl-L-homocysteine + 3 H(+). Functionally, methylates ribosomal protein L11. This Salmonella heidelberg (strain SL476) protein is Ribosomal protein L11 methyltransferase.